A 74-amino-acid polypeptide reads, in one-letter code: Conotoxin SIIID (74 aa).

The first 20 residues, 1–20 (MMSKLGVLLTVCLLLFPLTA), serve as a signal peptide directing secretion. The propeptide occupies 21 to 53 (LPLDGDQPADQLEDRMQDDISSEQYPSFVRRQK). Intrachain disulfides connect C54-C71, C55-C73, and C61-C74.

Belongs to the conotoxin M superfamily. Three disulfide isomers have been synthesized and tested. SIIID with the disulfide pairing 1-4;2-5;3-6 is the most active. Expressed by the venom duct.

It is found in the secreted. The short synthetic peptide SIIID (range 54-74, with disulfide pairing 1-4, 2-5 and 3-6) reversibly inhibits human alpha-7/CHRNA7 acetylcholine receptor (IC(50)=880 nM). Shows a paralytic effect in fish. The protein is Conotoxin SIIID of Conus striatus (Striated cone).